A 321-amino-acid chain; its full sequence is Olfactory receptor 3A2 (321 aa).

Topologically, residues 1-35 are extracellular; that stretch reads MSLQKLMEPEAGTNRTAVAEFILLGLVQTEEMQPV. N-linked (GlcNAc...) asparagine glycosylation is present at Asn-14. A helical membrane pass occupies residues 36–58; it reads VFVLLLFAYLVTTGGNLSILAAV. Over 59-66 the chain is Cytoplasmic; the sequence is LVEPKLHA. A helical membrane pass occupies residues 67 to 88; that stretch reads PMYFFLGNLSVLDVGCITVTVP. At 89 to 109 the chain is on the extracellular side; the sequence is AMLGRLLSHKSTISYDACLSQ. Cys-106 and Cys-198 are joined by a disulfide. Residues 110–129 traverse the membrane as a helical segment; the sequence is LFFFHLLAGMDCFLLTAMAY. Residues 130–149 are Cytoplasmic-facing; sequence DRLLAICQPLTYSTRMSQTV. A helical transmembrane segment spans residues 150–167; it reads QRMLVAASLACAFTNALT. The Extracellular segment spans residues 168–205; sequence HTVAMSTLNFCGPNEVNHFYCDLPQLFQLSCSSTQLNE. A helical transmembrane segment spans residues 206-229; it reads LLLFAVGFIMAGTPLVLIITAYSH. The Cytoplasmic segment spans residues 230 to 246; that stretch reads VAAAVLRIRSVEGRKKA. The helical transmembrane segment at 247 to 270 threads the bilayer; the sequence is FSTCGSHLTVVCLFFGRGIFNYMR. Over 271 to 281 the chain is Extracellular; that stretch reads LGSEEASDKDK. A helical membrane pass occupies residues 282–301; sequence GVGVFNTVINPMLNPLIYSL. Over 302–321 the chain is Cytoplasmic; that stretch reads RNPDVQGALWQIFLGRRSLT.

It belongs to the G-protein coupled receptor 1 family.

Its subcellular location is the cell membrane. Odorant receptor. The polypeptide is Olfactory receptor 3A2 (OR3A2) (Homo sapiens (Human)).